The primary structure comprises 298 residues: 4-hydroxy-tetrahydrodipicolinate synthase (298 aa).

Threonine 51 serves as a coordination point for pyruvate. Residue tyrosine 139 is the Proton donor/acceptor of the active site. Lysine 167 acts as the Schiff-base intermediate with substrate in catalysis. Isoleucine 209 is a binding site for pyruvate.

The protein belongs to the DapA family. Homotetramer; dimer of dimers.

The protein localises to the cytoplasm. It carries out the reaction L-aspartate 4-semialdehyde + pyruvate = (2S,4S)-4-hydroxy-2,3,4,5-tetrahydrodipicolinate + H2O + H(+). Its pathway is amino-acid biosynthesis; L-lysine biosynthesis via DAP pathway; (S)-tetrahydrodipicolinate from L-aspartate: step 3/4. Its function is as follows. Catalyzes the condensation of (S)-aspartate-beta-semialdehyde [(S)-ASA] and pyruvate to 4-hydroxy-tetrahydrodipicolinate (HTPA). The protein is 4-hydroxy-tetrahydrodipicolinate synthase of Histophilus somni (strain 129Pt) (Haemophilus somnus).